A 188-amino-acid chain; its full sequence is Large ribosomal subunit protein eL18 (188 aa).

The disordered stretch occupies residues 143 to 188 (RSAREAEKHFGPAPGVPHSHTKPHVRSKGRKFERARGRRASRAYKN). Basic residues-rich tracts occupy residues 161-171 (SHTKPHVRSKG) and 178-188 (RGRRASRAYKN).

The protein belongs to the eukaryotic ribosomal protein eL18 family.

It localises to the cytoplasm. In Caenorhabditis briggsae, this protein is Large ribosomal subunit protein eL18 (rpl-18).